A 486-amino-acid polypeptide reads, in one-letter code: Aspartyl/glutamyl-tRNA(Asn/Gln) amidotransferase subunit B (486 aa).

The protein belongs to the GatB/GatE family. GatB subfamily. Heterotrimer of A, B and C subunits.

The enzyme catalyses L-glutamyl-tRNA(Gln) + L-glutamine + ATP + H2O = L-glutaminyl-tRNA(Gln) + L-glutamate + ADP + phosphate + H(+). It catalyses the reaction L-aspartyl-tRNA(Asn) + L-glutamine + ATP + H2O = L-asparaginyl-tRNA(Asn) + L-glutamate + ADP + phosphate + 2 H(+). Functionally, allows the formation of correctly charged Asn-tRNA(Asn) or Gln-tRNA(Gln) through the transamidation of misacylated Asp-tRNA(Asn) or Glu-tRNA(Gln) in organisms which lack either or both of asparaginyl-tRNA or glutaminyl-tRNA synthetases. The reaction takes place in the presence of glutamine and ATP through an activated phospho-Asp-tRNA(Asn) or phospho-Glu-tRNA(Gln). The sequence is that of Aspartyl/glutamyl-tRNA(Asn/Gln) amidotransferase subunit B from Herminiimonas arsenicoxydans.